Reading from the N-terminus, the 990-residue chain is Leucine--tRNA ligase (990 aa).

The 'HIGH' region motif lies at 74-85; sequence PYPSGKGLHVGH. Residues 573–602 are disordered; the sequence is LPINLPDVPDYSPKTFDPEDAESDPEAPLS. Residues 763–767 carry the 'KMSKS' region motif; it reads KMGKS. K766 is an ATP binding site.

This sequence belongs to the class-I aminoacyl-tRNA synthetase family.

The protein localises to the cytoplasm. The catalysed reaction is tRNA(Leu) + L-leucine + ATP = L-leucyl-tRNA(Leu) + AMP + diphosphate. This is Leucine--tRNA ligase from Bifidobacterium adolescentis (strain ATCC 15703 / DSM 20083 / NCTC 11814 / E194a).